Here is a 355-residue protein sequence, read N- to C-terminus: Blue-sensitive opsin P467 (355 aa).

At 1–36 the chain is on the extracellular side; that stretch reads MNGTEGINFYVPLSNKTGLVRSPFEYPQYYLADPWK. 2 N-linked (GlcNAc...) asparagine glycosylation sites follow: Asn-2 and Asn-15. Residues 37–61 traverse the membrane as a helical segment; that stretch reads FKVLSFYMFFLIAAGMPLNGLTLFV. The Cytoplasmic segment spans residues 62 to 73; sequence TFQHKKLRQPLN. Residues 74 to 98 form a helical membrane-spanning segment; that stretch reads YILVNLAAANLVTVCCGFTVTFYAS. Topologically, residues 99 to 113 are extracellular; it reads WYAYFVFGPIGCAIE. Cys-110 and Cys-187 are joined by a disulfide. The chain crosses the membrane as a helical span at residues 114–133; that stretch reads GFFATIGGQVALWSLVVLAI. The Cytoplasmic portion of the chain corresponds to 134-152; it reads ERYIVICKPMGNFRFSATH. The helical transmembrane segment at 153–176 threads the bilayer; sequence AIMGIAFTWFMALACAGPPLFGWS. The Extracellular portion of the chain corresponds to 177–202; sequence RFIPEGMQCSCGPDYYTLNPDFHNES. Asn-200 is a glycosylation site (N-linked (GlcNAc...) asparagine). A helical membrane pass occupies residues 203 to 230; the sequence is YVIYMFIVHFTVPMVVIFFSYGRLVCKV. Residues 231–252 are Cytoplasmic-facing; sequence REAAAQQQESATTQKAEKEVTR. A helical membrane pass occupies residues 253–276; that stretch reads MVILMVLGFLLAWTPYAATAIWIF. Residues 277–284 lie on the Extracellular side of the membrane; it reads TNRGAAFS. Residues 285–309 form a helical membrane-spanning segment; that stretch reads VTFMTIPAFFSKSSSIYNPIIYVLL. Lys-296 bears the N6-(retinylidene)lysine mark. Topologically, residues 310 to 355 are cytoplasmic; sequence NKQFRNCMVTTICCGKNPFGDEDVSSSVSQSKTEVSSVSSSQVAPA. A disordered region spans residues 333–355; it reads VSSSVSQSKTEVSSVSSSQVAPA. The span at 334–355 shows a compositional bias: low complexity; that stretch reads SSSVSQSKTEVSSVSSSQVAPA.

This sequence belongs to the G-protein coupled receptor 1 family. Opsin subfamily. In terms of processing, phosphorylated on some or all of the serine and threonine residues present in the C-terminal region. In this lizard the color pigments are found in the rod-shaped photoreceptor cells which have been derived from ancestral cone-like photoreceptors.

It is found in the membrane. Functionally, visual pigments are the light-absorbing molecules that mediate vision. They consist of an apoprotein, opsin, covalently linked to cis-retinal. This is Blue-sensitive opsin P467 from Gekko gecko (Tokay gecko).